A 552-amino-acid polypeptide reads, in one-letter code: Hydroxylamine reductase (552 aa).

C3, C6, C15, and C21 together coordinate [4Fe-4S] cluster. 8 residues coordinate hybrid [4Fe-2O-2S] cluster: H247, E271, C315, C407, C435, C460, E495, and K497. C407 carries the cysteine persulfide modification.

It belongs to the HCP family. The cofactor is [4Fe-4S] cluster. Hybrid [4Fe-2O-2S] cluster serves as cofactor.

Its subcellular location is the cytoplasm. The enzyme catalyses A + NH4(+) + H2O = hydroxylamine + AH2 + H(+). Functionally, catalyzes the reduction of hydroxylamine to form NH(3) and H(2)O. The polypeptide is Hydroxylamine reductase (Thermosipho melanesiensis (strain DSM 12029 / CIP 104789 / BI429)).